A 344-amino-acid chain; its full sequence is Heat-inducible transcription repressor HrcA (344 aa).

The protein belongs to the HrcA family.

Negative regulator of class I heat shock genes (grpE-dnaK-dnaJ and groELS operons). Prevents heat-shock induction of these operons. This Streptococcus pyogenes serotype M1 protein is Heat-inducible transcription repressor HrcA.